Consider the following 771-residue polypeptide: Probable glycosyltransferase STELLO1 (771 aa).

The disordered stretch occupies residues M1 to P23. Over M1–R50 the chain is Cytoplasmic. The helical transmembrane segment at I51–T71 threads the bilayer. Residues D72–V771 are Lumenal-facing. N-linked (GlcNAc...) asparagine glycans are attached at residues N242 and N729.

It belongs to the STELLO family. As to quaternary structure, homo- and heterodimer with STL2. Interacts with CESA1, CESA3, CESA4, CESA6, CESA7 and CESA8, but not with GOT1. Expressed in cells that are expanding or producing secondary cell walls.

The protein localises to the golgi apparatus membrane. Probable glycosyltransferase regulating the assembly and trafficking of cellulose synthase complexes. The protein is Probable glycosyltransferase STELLO1 of Arabidopsis thaliana (Mouse-ear cress).